A 544-amino-acid polypeptide reads, in one-letter code: Pectinesterase 3 (544 aa).

N-linked (GlcNAc...) asparagine glycosylation is found at N174, N257, and N291. 2 residues coordinate substrate: T306 and Q336. Residue D359 is the Proton donor of the active site. D380 acts as the Nucleophile in catalysis. Positions 448 and 450 each coordinate substrate. Residue N532 is glycosylated (N-linked (GlcNAc...) asparagine).

In the N-terminal section; belongs to the PMEI family. This sequence in the C-terminal section; belongs to the pectinesterase family.

The protein localises to the secreted. It localises to the cell wall. It carries out the reaction [(1-&gt;4)-alpha-D-galacturonosyl methyl ester](n) + n H2O = [(1-&gt;4)-alpha-D-galacturonosyl](n) + n methanol + n H(+). The protein operates within glycan metabolism; pectin degradation; 2-dehydro-3-deoxy-D-gluconate from pectin: step 1/5. In terms of biological role, acts in the modification of cell walls via demethylesterification of cell wall pectin. The chain is Pectinesterase 3 (PME3) from Solanum lycopersicum (Tomato).